A 1038-amino-acid polypeptide reads, in one-letter code: P3N-PIPO polyprotein (1038 aa).

One can recognise a Peptidase S30 domain in the interval 170-313; sequence LVAKSDFDDL…AGDVGRTMHY (144 aa). Active-site for P1 proteinase activity residues include histidine 224, glutamate 233, and serine 266. Residues 365-368 carry the Involved in interaction with stylet and aphid transmission motif; that stretch reads KMAC. Residues 622–624 carry the Involved in virions binding and aphid transmission motif; it reads PTK. One can recognise a Peptidase C6 domain in the interval 648–770; that stretch reads MYIAKEGYCY…EGEMKWYRVG (123 aa). Residues cysteine 656 and histidine 729 each act as for helper component proteinase activity in the active site.

It belongs to the potyviridae P3N-PIPO polyprotein family. Interacts (via PIPO domain) with host PCaP1 protein; this interaction may help to anchor the movement complex to the plasma membrane from which the complex could move to the plasmodesmata. Potyviral RNA is expressed as two polyproteins which undergo post-translational proteolytic processing. Genome polyprotein is processed by NIa-pro, P1 and HC-pro proteinases resulting in the production of at least ten individual proteins. P3N-PIPO is cleaved by P1 and HC-pro proteinases resulting in the production of three individual proteins. The P1 proteinase and the HC-pro cleave only their respective C-termini autocatalytically.

It is found in the host cell junction. It localises to the host plasmodesma. The enzyme catalyses Hydrolyzes a Gly-|-Gly bond at its own C-terminus, commonly in the sequence -Tyr-Xaa-Val-Gly-|-Gly, in the processing of the potyviral polyprotein.. Its function is as follows. Required for aphid transmission and also has proteolytic activity. Only cleaves a Gly-Gly dipeptide at its own C-terminus. Interacts with virions and aphid stylets. Acts as a suppressor of RNA-mediated gene silencing, also known as post-transcriptional gene silencing (PTGS), a mechanism of plant viral defense that limits the accumulation of viral RNAs. May have RNA-binding activity. Functionally, allows efficient cell to cell propagation, by bypassing the host cell wall barrier. Transports viral genome to neighboring plant cells directly through plasmosdesmata, without any budding. The polypeptide is P3N-PIPO polyprotein (Beet mosaic virus (BtMV)).